The following is a 147-amino-acid chain: Hemoglobin subunit beta (147 aa).

Valine 2 is subject to N-acetylvaline. The Globin domain occupies 3–147 (HLTAEEKSAV…VANALAHKYH (145 aa)). Threonine 13 bears the Phosphothreonine mark. Serine 45 carries the phosphoserine modification. Position 60 is an N6-acetyllysine (lysine 60). Histidine 64 serves as a coordination point for heme b. N6-acetyllysine is present on lysine 83. Residue histidine 93 coordinates heme b. Cysteine 94 carries the post-translational modification S-nitrosocysteine. Lysine 145 is modified (N6-acetyllysine).

The protein belongs to the globin family. Heterotetramer of two alpha chains and two beta chains. In terms of tissue distribution, red blood cells.

Functionally, involved in oxygen transport from the lung to the various peripheral tissues. The polypeptide is Hemoglobin subunit beta (HBB) (Sapajus apella (Brown-capped capuchin)).